We begin with the raw amino-acid sequence, 231 residues long: Cytochrome c oxidase subunit 2 (231 aa).

Residues 1–14 (MAHPSQLGLQDAAS) are Mitochondrial intermembrane-facing. The chain crosses the membrane as a helical span at residues 15–45 (PVMEELLHFHDHALMIVFLISTLVFYIILAM). The Mitochondrial matrix segment spans residues 46-59 (MTTKMTDKYILDAQ). Residues 60-87 (EIEIVWTLLPAIVLILVALPSLRILYLI) form a helical membrane-spanning segment. At 88-231 (DEVENPHLTI…WSSSMLEEAX (144 aa)) the chain is on the mitochondrial intermembrane side. Residues His-161, Cys-196, Glu-198, Cys-200, His-204, and Met-207 each contribute to the Cu cation site. Glu-198 serves as a coordination point for Mg(2+).

Belongs to the cytochrome c oxidase subunit 2 family. Component of the cytochrome c oxidase (complex IV, CIV), a multisubunit enzyme composed of 14 subunits. The complex is composed of a catalytic core of 3 subunits MT-CO1, MT-CO2 and MT-CO3, encoded in the mitochondrial DNA, and 11 supernumerary subunits COX4I, COX5A, COX5B, COX6A, COX6B, COX6C, COX7A, COX7B, COX7C, COX8 and NDUFA4, which are encoded in the nuclear genome. The complex exists as a monomer or a dimer and forms supercomplexes (SCs) in the inner mitochondrial membrane with NADH-ubiquinone oxidoreductase (complex I, CI) and ubiquinol-cytochrome c oxidoreductase (cytochrome b-c1 complex, complex III, CIII), resulting in different assemblies (supercomplex SCI(1)III(2)IV(1) and megacomplex MCI(2)III(2)IV(2)). Found in a complex with TMEM177, COA6, COX18, COX20, SCO1 and SCO2. Interacts with TMEM177 in a COX20-dependent manner. Interacts with COX20. Interacts with COX16. Cu cation serves as cofactor.

The protein localises to the mitochondrion inner membrane. The catalysed reaction is 4 Fe(II)-[cytochrome c] + O2 + 8 H(+)(in) = 4 Fe(III)-[cytochrome c] + 2 H2O + 4 H(+)(out). Component of the cytochrome c oxidase, the last enzyme in the mitochondrial electron transport chain which drives oxidative phosphorylation. The respiratory chain contains 3 multisubunit complexes succinate dehydrogenase (complex II, CII), ubiquinol-cytochrome c oxidoreductase (cytochrome b-c1 complex, complex III, CIII) and cytochrome c oxidase (complex IV, CIV), that cooperate to transfer electrons derived from NADH and succinate to molecular oxygen, creating an electrochemical gradient over the inner membrane that drives transmembrane transport and the ATP synthase. Cytochrome c oxidase is the component of the respiratory chain that catalyzes the reduction of oxygen to water. Electrons originating from reduced cytochrome c in the intermembrane space (IMS) are transferred via the dinuclear copper A center (CU(A)) of subunit 2 and heme A of subunit 1 to the active site in subunit 1, a binuclear center (BNC) formed by heme A3 and copper B (CU(B)). The BNC reduces molecular oxygen to 2 water molecules using 4 electrons from cytochrome c in the IMS and 4 protons from the mitochondrial matrix. The polypeptide is Cytochrome c oxidase subunit 2 (MT-CO2) (Latimeria chalumnae (Coelacanth)).